The following is a 234-amino-acid chain: Proteasome subunit alpha type-2 (234 aa).

At A2 the chain carries N-acetylalanine. Y121 bears the Phosphotyrosine mark.

Belongs to the peptidase T1A family. In terms of assembly, the 26S proteasome consists of a 20S proteasome core and two 19S regulatory subunits. The 20S proteasome core is composed of 28 subunits that are arranged in four stacked rings, resulting in a barrel-shaped structure. The two end rings are each formed by seven alpha subunits, and the two central rings are each formed by seven beta subunits. The catalytic chamber with the active sites is on the inside of the barrel.

Its subcellular location is the cytoplasm. It localises to the nucleus. In terms of biological role, the proteasome is a multicatalytic proteinase complex which is characterized by its ability to cleave peptides with Arg, Phe, Tyr, Leu, and Glu adjacent to the leaving group at neutral or slightly basic pH. The proteasome has an ATP-dependent proteolytic activity. PSMA2 may have a potential regulatory effect on another component(s) of the proteasome complex through tyrosine phosphorylation. In Carassius auratus (Goldfish), this protein is Proteasome subunit alpha type-2 (psma2).